The primary structure comprises 212 residues: ATP phosphoribosyltransferase (212 aa).

It belongs to the ATP phosphoribosyltransferase family. Short subfamily. Heteromultimer composed of HisG and HisZ subunits.

The protein localises to the cytoplasm. It carries out the reaction 1-(5-phospho-beta-D-ribosyl)-ATP + diphosphate = 5-phospho-alpha-D-ribose 1-diphosphate + ATP. It functions in the pathway amino-acid biosynthesis; L-histidine biosynthesis; L-histidine from 5-phospho-alpha-D-ribose 1-diphosphate: step 1/9. Functionally, catalyzes the condensation of ATP and 5-phosphoribose 1-diphosphate to form N'-(5'-phosphoribosyl)-ATP (PR-ATP). Has a crucial role in the pathway because the rate of histidine biosynthesis seems to be controlled primarily by regulation of HisG enzymatic activity. In Clostridium botulinum (strain Okra / Type B1), this protein is ATP phosphoribosyltransferase.